Here is a 342-residue protein sequence, read N- to C-terminus: uncharacterized protein (342 aa).

The first 18 residues, 1-18 (MWKKLMLLLLMAIPLVSA), serve as a signal peptide directing secretion.

This is an uncharacterized protein from Methanocaldococcus jannaschii (strain ATCC 43067 / DSM 2661 / JAL-1 / JCM 10045 / NBRC 100440) (Methanococcus jannaschii).